The chain runs to 95 residues: Translation initiation factor IF-1 (95 aa).

The S1-like domain maps to 1–72 (MAKEELIEMD…TKARITYRHK (72 aa)). A disordered region spans residues 70-95 (RHKVGGPPGPVTGGGNRPPPRQPRRR). Pro residues predominate over residues 86–95 (RPPPRQPRRR).

This sequence belongs to the IF-1 family. In terms of assembly, component of the 30S ribosomal translation pre-initiation complex which assembles on the 30S ribosome in the order IF-2 and IF-3, IF-1 and N-formylmethionyl-tRNA(fMet); mRNA recruitment can occur at any time during PIC assembly.

The protein localises to the cytoplasm. In terms of biological role, one of the essential components for the initiation of protein synthesis. Stabilizes the binding of IF-2 and IF-3 on the 30S subunit to which N-formylmethionyl-tRNA(fMet) subsequently binds. Helps modulate mRNA selection, yielding the 30S pre-initiation complex (PIC). Upon addition of the 50S ribosomal subunit IF-1, IF-2 and IF-3 are released leaving the mature 70S translation initiation complex. The protein is Translation initiation factor IF-1 of Rhodospirillum rubrum (strain ATCC 11170 / ATH 1.1.1 / DSM 467 / LMG 4362 / NCIMB 8255 / S1).